The primary structure comprises 467 residues: Probable citrate synthase 1, mitochondrial (467 aa).

Residues His-303, His-349, and Asp-404 contribute to the active site.

The protein belongs to the citrate synthase family. Homodimer.

Its subcellular location is the mitochondrion matrix. The enzyme catalyses oxaloacetate + acetyl-CoA + H2O = citrate + CoA + H(+). Its pathway is carbohydrate metabolism; tricarboxylic acid cycle; isocitrate from oxaloacetate: step 1/2. This chain is Probable citrate synthase 1, mitochondrial, found in Aedes aegypti (Yellowfever mosquito).